Reading from the N-terminus, the 194-residue chain is uncharacterized protein (194 aa).

This is an uncharacterized protein from Tomato ringspot virus (isolate raspberry) (ToRSV).